Consider the following 664-residue polypeptide: Probable LRR receptor-like serine/threonine-protein kinase At1g63430 (664 aa).

The signal sequence occupies residues 1–22 (MRSKYFCSLALVLGLFFVSCDG). At 23–288 (FASNEVQALR…KHHRASKPKW (266 aa)) the chain is on the extracellular side. Asn-75 carries an N-linked (GlcNAc...) asparagine glycan. LRR repeat units lie at residues 94-116 (YLQELILHGNILIGTIPKEIGNL), 118-140 (NLKILDLGNNHLMGPIPAEIGSL), 142-165 (GIMIINLQSNGLTGKLPAELGNLK), and 166-178 (YLRELHIDRNRLQ). Asn-197 carries N-linked (GlcNAc...) asparagine glycosylation. A helical membrane pass occupies residues 289–309 (LLALEIVTGSMVGLLLLVALF). Residues 310-664 (SAVHRWNNRS…LAWAELALDS (355 aa)) lie on the Cytoplasmic side of the membrane. Residues 360-642 (EDFSNIIGLS…ELCETLESRI (283 aa)) enclose the Protein kinase domain.

Belongs to the protein kinase superfamily. Ser/Thr protein kinase family.

It is found in the cell membrane. The enzyme catalyses L-seryl-[protein] + ATP = O-phospho-L-seryl-[protein] + ADP + H(+). It carries out the reaction L-threonyl-[protein] + ATP = O-phospho-L-threonyl-[protein] + ADP + H(+). In Arabidopsis thaliana (Mouse-ear cress), this protein is Probable LRR receptor-like serine/threonine-protein kinase At1g63430.